Here is a 30-residue protein sequence, read N- to C-terminus: Beta-endorphin-2 (30 aa).

Residue tyrosine 1 is modified to N-acetyltyrosine.

Belongs to the POMC family.

Its subcellular location is the secreted. The chain is Beta-endorphin-2 from Oncorhynchus keta (Chum salmon).